The sequence spans 137 residues: MRPQQAPVSGKVFIQRDYSSGTRCQFQTKFPAELENRIDRQQFEETVRTLNNLYAEAEKLGGQSYLEGCLACLTAYTIFLCMETHYEKVLKKVSKYIQEQNEKIYAPQGLLLTDPIERGLRVIEITIYEDRGMSSGR.

Residues C69 and C72 are each lipidated (S-palmitoyl cysteine).

This sequence belongs to the ERF4 family. In terms of assembly, interacts with GOLGA3. Interacts with ZDHHC9. In terms of processing, palmitoylated on Cys-69 and Cys-72; which is required for Golgi localization and interaction with GOLGA3.

Its subcellular location is the golgi apparatus membrane. Functionally, may be involved in protein transport from Golgi to cell surface. The ZDHHC9-GOLGA7 complex is a palmitoyltransferase specific for HRAS and NRAS. In Bos taurus (Bovine), this protein is Golgin subfamily A member 7 (GOLGA7).